An 84-amino-acid polypeptide reads, in one-letter code: LYR motif-containing protein 5B (84 aa).

The protein belongs to the complex I LYR family.

This is LYR motif-containing protein 5B (lyrm5b) from Danio rerio (Zebrafish).